Reading from the N-terminus, the 137-residue chain is MSFKFGKNSEKQLATVKPELQKVARRALELSPYDFTIVQGIRTVAQSAQNIANGTSFLKDPSKSKHITGDAIDFAPYINGKIDWNDLEAFWAVKKAFEQAGKELGIKLRFGADWNASGDYHDEIKRGTYDGGHVELV.

Zn(2+)-binding residues include His66, Asp73, and His133.

Belongs to the peptidase M15C family. Zn(2+) is required as a cofactor.

Functionally, endolysin with L-alanyl-D-glutamate peptidase activity that degrades host peptidoglycans and participates with the holin in the sequential events which lead to the programmed host cell lysis releasing the mature viral particles. Once the holin has permeabilized the host cell membrane, the endolysin can reach the periplasm and break down the peptidoglycan layer by hydrolyzing the link between L-alanine and D-glutamate residues. The polypeptide is L-alanyl-D-glutamate peptidase (lys) (Escherichia coli (Enterobacteria phage T5)).